The primary structure comprises 182 residues: MFKYIGDIVKGTGTQLRSLVMVFSHGFRKRDTLQYPEEPVYLPPRYRGRIVLTRDPDGEERCVACNLCAVACPVGCISLQKAETEDGRWYPEFFRINFSRCIFCGLCEEACPTTAIQLTPDFEMAEFKRQDLVYEKEDLLISGPGKNPDYNFYRVAGMAIAGKPKGSAQNEAEPINVKSLLP.

2 4Fe-4S ferredoxin-type domains span residues 52-82 and 92-121; these read LTRD…LQKA and EFFR…LTPD. [4Fe-4S] cluster is bound by residues Cys62, Cys65, Cys68, Cys72, Cys101, Cys104, Cys107, and Cys111.

Belongs to the complex I 23 kDa subunit family. NDH-1 is composed of 13 different subunits. Subunits NuoA, H, J, K, L, M, N constitute the membrane sector of the complex. The cofactor is [4Fe-4S] cluster.

It is found in the cell inner membrane. The enzyme catalyses a quinone + NADH + 5 H(+)(in) = a quinol + NAD(+) + 4 H(+)(out). In terms of biological role, NDH-1 shuttles electrons from NADH, via FMN and iron-sulfur (Fe-S) centers, to quinones in the respiratory chain. The immediate electron acceptor for the enzyme in this species is believed to be ubiquinone. Couples the redox reaction to proton translocation (for every two electrons transferred, four hydrogen ions are translocated across the cytoplasmic membrane), and thus conserves the redox energy in a proton gradient. The sequence is that of NADH-quinone oxidoreductase subunit I from Pseudomonas entomophila (strain L48).